Reading from the N-terminus, the 533-residue chain is Putative phosphate permease jhp_1384 (533 aa).

The next 12 membrane-spanning stretches (helical) occupy residues 23–43 (IALALLFLIGAALLALIFGQA), 47–67 (GLLLIFAAVIGGYMAMNIGAN), 81–101 (AISMGGAILIAAVCEMLGAII), 129–149 (VMLASLLSGALWLHVATLIGA), 156–176 (SVVGGIMGAGMAAAGMSAINW), 182–202 (IVASWVISPLMGALIAMFFLM), 221–241 (VVPYLVALMSLAFSWYLIVKV), 248–268 (VGFEIQLACGCVLALLIFILF), 286–306 (VNELFNVPLIFAAALLSFAHG), 338–358 (VPLWIMVVGAAGIALGLSLYG), 372–392 (LDKMQAFCIALSAVITVLLAS), and 509–529 (LVTVPVSALLGALLFVALGFI).

The protein belongs to the inorganic phosphate transporter (PiT) (TC 2.A.20) family.

It localises to the cell membrane. Functionally, potential transporter for phosphate. In Helicobacter pylori (strain J99 / ATCC 700824) (Campylobacter pylori J99), this protein is Putative phosphate permease jhp_1384.